A 376-amino-acid polypeptide reads, in one-letter code: Flap endonuclease 1 (376 aa).

The segment at 1–105 is N-domain; the sequence is MGIKGLSKLL…GELNKRKENA (105 aa). Residue Asp34 coordinates Mg(2+). 2 residues coordinate DNA: Arg47 and Arg71. Residues Asp87, Glu159, Glu161, Asp180, and Asp182 each coordinate Mg(2+). Residues 123–254 form an I-domain region; sequence QAKKLMKRTA…ITAFELIQQY (132 aa). Position 159 (Glu159) interacts with DNA. Positions 232 and 234 each coordinate DNA. Mg(2+) is bound at residue Asp234. The interval 336 to 344 is interaction with PCNA; sequence AQGRLDSFF. The interval 352–376 is disordered; that stretch reads SKSEAASGVKRKKPTTKAKESRKKK. The segment covering 360–376 has biased composition (basic residues); sequence VKRKKPTTKAKESRKKK.

It belongs to the XPG/RAD2 endonuclease family. FEN1 subfamily. In terms of assembly, interacts with PCNA. Three molecules of FEN1 bind to one PCNA trimer with each molecule binding to one PCNA monomer. PCNA stimulates the nuclease activity without altering cleavage specificity. The cofactor is Mg(2+). In terms of processing, phosphorylated. Phosphorylation upon DNA damage induces relocalization to the nuclear plasma.

It localises to the nucleus. The protein resides in the nucleolus. The protein localises to the nucleoplasm. Its subcellular location is the mitochondrion. Structure-specific nuclease with 5'-flap endonuclease and 5'-3' exonuclease activities involved in DNA replication and repair. During DNA replication, cleaves the 5'-overhanging flap structure that is generated by displacement synthesis when DNA polymerase encounters the 5'-end of a downstream Okazaki fragment. It enters the flap from the 5'-end and then tracks to cleave the flap base, leaving a nick for ligation. Also involved in the long patch base excision repair (LP-BER) pathway, by cleaving within the apurinic/apyrimidinic (AP) site-terminated flap. Acts as a genome stabilization factor that prevents flaps from equilibrating into structures that lead to duplications and deletions. Also possesses 5'-3' exonuclease activity on nicked or gapped double-stranded DNA, and exhibits RNase H activity. Also involved in replication and repair of rDNA and in repairing mitochondrial DNA. This Entamoeba dispar (strain ATCC PRA-260 / SAW760) protein is Flap endonuclease 1.